A 20-amino-acid chain; its full sequence is Fibrinogen beta chain (20 aa).

Tyrosine 5 is subject to Sulfotyrosine.

In terms of assembly, heterohexamer; disulfide linked. Contains 2 sets of 3 non-identical chains (alpha, beta and gamma). The 2 heterotrimers are in head to head conformation with the N-termini in a small central domain. In terms of processing, conversion of fibrinogen to fibrin is triggered by thrombin, which cleaves fibrinopeptides A and B from alpha and beta chains, and thus exposes the N-terminal polymerization sites responsible for the formation of the soft clot.

The protein resides in the secreted. Its function is as follows. Cleaved by the protease thrombin to yield monomers which, together with fibrinogen alpha (FGA) and fibrinogen gamma (FGG), polymerize to form an insoluble fibrin matrix. Fibrin has a major function in hemostasis as one of the primary components of blood clots. In addition, functions during the early stages of wound repair to stabilize the lesion and guide cell migration during re-epithelialization. Was originally thought to be essential for platelet aggregation, based on in vitro studies using anticoagulated blood. However subsequent studies have shown that it is not absolutely required for thrombus formation in vivo. Enhances expression of SELP in activated platelets. Maternal fibrinogen is essential for successful pregnancy. Fibrin deposition is also associated with infection, where it protects against IFNG-mediated hemorrhage. May also facilitate the antibacterial immune response via both innate and T-cell mediated pathways. This Capra hircus (Goat) protein is Fibrinogen beta chain (FGB).